A 356-amino-acid polypeptide reads, in one-letter code: Probable L-asparaginase 4 (356 aa).

The N-terminal stretch at 1-22 (MWGFIVTCGIFLVLLCQLRLLS) is a signal peptide. Positions 36-356 (PNVTVFAMGG…RDIEGLFSIK (321 aa)) constitute an Asparaginase/glutaminase domain. A glycan (N-linked (GlcNAc...) asparagine) is linked at Asn-37. Catalysis depends on Thr-46, which acts as the O-isoaspartyl threonine intermediate. N-linked (GlcNAc...) asparagine glycosylation is present at Asn-52. Substrate is bound by residues Ser-93 and 126 to 127 (TD). Asn-176 carries an N-linked (GlcNAc...) asparagine glycan.

The protein belongs to the asparaginase 1 family.

The protein resides in the secreted. It localises to the cell wall. It carries out the reaction L-asparagine + H2O = L-aspartate + NH4(+). This Schizosaccharomyces pombe (strain 972 / ATCC 24843) (Fission yeast) protein is Probable L-asparaginase 4.